A 289-amino-acid chain; its full sequence is Oxaloacetate decarboxylase (289 aa).

S50 lines the substrate pocket. D88 is a binding site for Mg(2+). Residues R159 and H235 each contribute to the substrate site.

Belongs to the isocitrate lyase/PEP mutase superfamily. Oxaloacetate decarboxylase family. Homotetramer; dimer of dimers. Mg(2+) is required as a cofactor.

It catalyses the reaction oxaloacetate + H(+) = pyruvate + CO2. Functionally, catalyzes the decarboxylation of oxaloacetate into pyruvate. Seems to play a role in maintaining cellular concentrations of bicarbonate and pyruvate. The protein is Oxaloacetate decarboxylase of Pseudomonas syringae pv. tomato (strain ATCC BAA-871 / DC3000).